Here is a 444-residue protein sequence, read N- to C-terminus: Acyl-CoA 6-desaturase (444 aa).

The Cytoplasmic segment spans residues 1 to 131 (MGKGGNQGEG…DMNLFKTNHV (131 aa)). One can recognise a Cytochrome b5 heme-binding domain in the interval 18–95 (VPTFSWEEIQ…LKPLLIGELA (78 aa)). The chain crosses the membrane as a helical span at residues 132-152 (FFLLLLAHIIALESIAWFTVF). Residues 153-157 (YFGNG) lie on the Lumenal side of the membrane. The chain crosses the membrane as a helical span at residues 158-178 (WISTLITAFVLATSQAQAGWL). The Cytoplasmic portion of the chain corresponds to 179–264 (QHDYGHLSVY…KYLPYNHQHE (86 aa)). The Histidine box-1 signature appears at 180-184 (HDYGH). A Histidine box-2 motif is present at residues 217 to 221 (HFQHH). Residues 265–285 (YFFLIGPPLLIPMYFQYQIIM) traverse the membrane as a helical segment. Topologically, residues 286-305 (TMIVHKNWVDLAWAISYYIR) are lumenal. Residues 306–326 (FFITYIPFYGILGALLFLNFI) traverse the membrane as a helical segment. The Cytoplasmic segment spans residues 327–444 (RFLESHWFVW…KLWLDAYLHK (118 aa)). The Histidine box-3 signature appears at 382–386 (QIEHH).

It belongs to the fatty acid desaturase type 1 family.

The protein localises to the endoplasmic reticulum membrane. The catalysed reaction is (9Z,12Z)-octadecadienoyl-CoA + 2 Fe(II)-[cytochrome b5] + O2 + 2 H(+) = (6Z,9Z,12Z)-octadecatrienoyl-CoA + 2 Fe(III)-[cytochrome b5] + 2 H2O. It carries out the reaction (9Z,12Z,15Z)-octadecatrienoyl-CoA + 2 Fe(II)-[cytochrome b5] + O2 + 2 H(+) = (6Z,9Z,12Z,15Z)-octadecatetraenoyl-CoA + 2 Fe(III)-[cytochrome b5] + 2 H2O. The enzyme catalyses (9Z,12Z,15Z,18Z,21Z)-tetracosapentaenoyl-CoA + 2 Fe(II)-[cytochrome b5] + O2 + 2 H(+) = (6Z,9Z,12Z,15Z,18Z,21Z)-tetracosahexaenoyl-CoA + 2 Fe(III)-[cytochrome b5] + 2 H2O. It catalyses the reaction (11E)-octadecenoyl-CoA + 2 Fe(II)-[cytochrome b5] + O2 + 2 H(+) = (6Z,11E)-octadecadienoyl-CoA + 2 Fe(III)-[cytochrome b5] + 2 H2O. The catalysed reaction is (11Z,14Z)-eicosadienoyl-CoA + 2 Fe(II)-[cytochrome b5] + O2 + 2 H(+) = (8Z,11Z,14Z)-eicosatrienoyl-CoA + 2 Fe(III)-[cytochrome b5] + 2 H2O. It carries out the reaction (11Z,14Z,17Z)-eicosatrienoyl-CoA + 2 Fe(II)-[cytochrome b5] + O2 + 2 H(+) = (8Z,11Z,14Z,17Z)-eicosatetraenoyl-CoA + 2 Fe(III)-[cytochrome b5] + 2 H2O. It participates in lipid metabolism; polyunsaturated fatty acid biosynthesis. Functionally, involved in the biosynthesis of highly unsaturated fatty acids (HUFA) from the essential polyunsaturated fatty acids (PUFA) linoleic acid (LA) (18:2n-6) and alpha-linolenic acid (ALA) (18:3n-3) precursors, acting as a fatty acyl-coenzyme A (CoA) desaturase that introduces a cis double bond at carbon 6 of the fatty acyl chain. Catalyzes the first and rate limiting step in this pathway which is the desaturation of LA (18:2n-6) and ALA (18:3n-3) into gamma-linoleate (GLA) (18:3n-6) and stearidonate (18:4n-3), respectively. Subsequently, in the biosynthetic pathway of HUFA n-3 series, it desaturates tetracosapentaenoate (24:5n-3) to tetracosahexaenoate (24:6n-3), which is then converted to docosahexaenoate (DHA)(22:6n-3), an important lipid for nervous system function. It can also desaturate (11E)-octadecenoate (trans-vaccenoate) at carbon 6 generating (6Z,11E)-octadecadienoate. In addition to Delta-6 activity, this enzyme exhibits Delta-8 activity with slight biases toward n-3 fatty acyl-CoA substrates. The protein is Acyl-CoA 6-desaturase (FADS2) of Pongo abelii (Sumatran orangutan).